The following is a 281-amino-acid chain: Phosphate import ATP-binding protein PstB (281 aa).

An ABC transporter domain is found at 33 to 276; sequence FKIENLSLWY…PQLKRTRDYI (244 aa). 67–74 serves as a coordination point for ATP; that stretch reads GPSGCGKS.

The protein belongs to the ABC transporter superfamily. Phosphate importer (TC 3.A.1.7) family. In terms of assembly, the complex is composed of two ATP-binding proteins (PstB), two transmembrane proteins (PstC and PstA) and a solute-binding protein (PstS).

The protein resides in the cell membrane. It carries out the reaction phosphate(out) + ATP + H2O = ADP + 2 phosphate(in) + H(+). Functionally, part of the ABC transporter complex PstSACB involved in phosphate import. Responsible for energy coupling to the transport system. The chain is Phosphate import ATP-binding protein PstB from Mycoplasma mobile (strain ATCC 43663 / 163K / NCTC 11711) (Mesomycoplasma mobile).